Here is a 388-residue protein sequence, read N- to C-terminus: LL-diaminopimelate aminotransferase (388 aa).

Substrate is bound by residues tyrosine 15 and glycine 40. Residues tyrosine 69, 103 to 104, tyrosine 128, asparagine 178, tyrosine 209, and 237 to 239 contribute to the pyridoxal 5'-phosphate site; these read SK and SLS. The substrate site is built by lysine 104, tyrosine 128, and asparagine 178. Lysine 240 is subject to N6-(pyridoxal phosphate)lysine. Arginine 248 provides a ligand contact to pyridoxal 5'-phosphate. Arginine 366 contributes to the substrate binding site.

It belongs to the class-I pyridoxal-phosphate-dependent aminotransferase family. LL-diaminopimelate aminotransferase subfamily. In terms of assembly, homodimer. The cofactor is pyridoxal 5'-phosphate.

The catalysed reaction is (2S,6S)-2,6-diaminopimelate + 2-oxoglutarate = (S)-2,3,4,5-tetrahydrodipicolinate + L-glutamate + H2O + H(+). It participates in amino-acid biosynthesis; L-lysine biosynthesis via DAP pathway; LL-2,6-diaminopimelate from (S)-tetrahydrodipicolinate (aminotransferase route): step 1/1. Involved in the synthesis of meso-diaminopimelate (m-DAP or DL-DAP), required for both lysine and peptidoglycan biosynthesis. Catalyzes the direct conversion of tetrahydrodipicolinate to LL-diaminopimelate. Can also use m-DAP instead of LL-DAP as the amino-group donor. The sequence is that of LL-diaminopimelate aminotransferase from Syntrophobacter fumaroxidans (strain DSM 10017 / MPOB).